A 237-amino-acid chain; its full sequence is 6-carboxyhexanoate--CoA ligase (237 aa).

This sequence belongs to the BioW family. In terms of assembly, homodimer. The cofactor is Mg(2+).

The catalysed reaction is heptanedioate + ATP + CoA = 6-carboxyhexanoyl-CoA + AMP + diphosphate. Its pathway is metabolic intermediate metabolism; pimeloyl-CoA biosynthesis; pimeloyl-CoA from pimelate: step 1/1. Its function is as follows. Catalyzes the transformation of pimelate into pimeloyl-CoA with concomitant hydrolysis of ATP to AMP. This Methanocaldococcus jannaschii (strain ATCC 43067 / DSM 2661 / JAL-1 / JCM 10045 / NBRC 100440) (Methanococcus jannaschii) protein is 6-carboxyhexanoate--CoA ligase.